The following is a 117-amino-acid chain: Ribonuclease P protein component (117 aa).

This sequence belongs to the RnpA family. Consists of a catalytic RNA component (M1 or rnpB) and a protein subunit.

It catalyses the reaction Endonucleolytic cleavage of RNA, removing 5'-extranucleotides from tRNA precursor.. Its function is as follows. RNaseP catalyzes the removal of the 5'-leader sequence from pre-tRNA to produce the mature 5'-terminus. It can also cleave other RNA substrates such as 4.5S RNA. The protein component plays an auxiliary but essential role in vivo by binding to the 5'-leader sequence and broadening the substrate specificity of the ribozyme. The protein is Ribonuclease P protein component of Aliivibrio salmonicida (strain LFI1238) (Vibrio salmonicida (strain LFI1238)).